The primary structure comprises 239 residues: Endoglucanase A (239 aa).

A signal peptide spans 1 to 16 (MKLSMTLSLFAATAMG).

This sequence belongs to the glycosyl hydrolase 12 (cellulase H) family.

The catalysed reaction is Endohydrolysis of (1-&gt;4)-beta-D-glucosidic linkages in cellulose, lichenin and cereal beta-D-glucans.. Its function is as follows. Has carboxylmethylcellulase activity. The protein is Endoglucanase A (cekA) of Aspergillus kawachii (strain NBRC 4308) (White koji mold).